Consider the following 593-residue polypeptide: Elongation factor 4 (593 aa).

In terms of domain architecture, tr-type G spans K2–T181. GTP contacts are provided by residues D14–T19 and N128–D131.

The protein belongs to the TRAFAC class translation factor GTPase superfamily. Classic translation factor GTPase family. LepA subfamily.

The protein resides in the cell inner membrane. The enzyme catalyses GTP + H2O = GDP + phosphate + H(+). In terms of biological role, required for accurate and efficient protein synthesis under certain stress conditions. May act as a fidelity factor of the translation reaction, by catalyzing a one-codon backward translocation of tRNAs on improperly translocated ribosomes. Back-translocation proceeds from a post-translocation (POST) complex to a pre-translocation (PRE) complex, thus giving elongation factor G a second chance to translocate the tRNAs correctly. Binds to ribosomes in a GTP-dependent manner. The sequence is that of Elongation factor 4 from Phocaeicola vulgatus (strain ATCC 8482 / DSM 1447 / JCM 5826 / CCUG 4940 / NBRC 14291 / NCTC 11154) (Bacteroides vulgatus).